A 276-amino-acid polypeptide reads, in one-letter code: NADPH-dependent 7-cyano-7-deazaguanine reductase (276 aa).

A substrate-binding site is contributed by 80-82 (VES). Residue 82 to 83 (SK) participates in NADPH binding. Residue Cys183 is the Thioimide intermediate of the active site. Asp190 serves as the catalytic Proton donor. A substrate-binding site is contributed by 222–223 (HE). 251–252 (RG) is an NADPH binding site.

Belongs to the GTP cyclohydrolase I family. QueF type 2 subfamily. In terms of assembly, homodimer.

It is found in the cytoplasm. The catalysed reaction is 7-aminomethyl-7-carbaguanine + 2 NADP(+) = 7-cyano-7-deazaguanine + 2 NADPH + 3 H(+). The protein operates within tRNA modification; tRNA-queuosine biosynthesis. In terms of biological role, catalyzes the NADPH-dependent reduction of 7-cyano-7-deazaguanine (preQ0) to 7-aminomethyl-7-deazaguanine (preQ1). The protein is NADPH-dependent 7-cyano-7-deazaguanine reductase of Burkholderia orbicola (strain MC0-3).